Here is a 528-residue protein sequence, read N- to C-terminus: Nucleoporin ASM4 (528 aa).

One copy of the FG 1 repeat lies at 2–3; sequence FG. Over residues 23 to 50 the composition is skewed to low complexity; the sequence is TTQMFQSQSQLQPQPQPQPQQQQQHLQF. Disordered stretches follow at residues 23–64 and 88–144; these read TTQM…FGNS and IKNG…SMNA. Composition is skewed to polar residues over residues 51–64 and 97–108; these read NGSSDASSLRFGNS and QHGQGNNPSWVN. Residues 61–62 form an FG 2 repeat; that stretch reads FG. Positions 110–125 are enriched in basic residues; the sequence is PKKRFTPHTVIRRKTT. The segment covering 127-141 has biased composition (low complexity); it reads QNSSSDINQNDDSSS. 3 FG repeats span residues 195–196, 274–275, and 291–292; these read FG. Positions 265–394 constitute an RRM Nup35-type domain; sequence SSSLSAIIVF…IPYSKNAVEQ (130 aa). Ser-458 and Ser-464 each carry phosphoserine. The stretch at 490–510 forms a coiled coil; the sequence is NLLRNLESKMRQQEAKYRNNE. The FG 6 repeat unit spans residues 523-524; sequence FG.

As to quaternary structure, component of the nuclear pore complex (NPC). NPC constitutes the exclusive means of nucleocytoplasmic transport. NPCs allow the passive diffusion of ions and small molecules and the active, nuclear transport receptor-mediated bidirectional transport of macromolecules such as proteins, RNAs, ribonucleoparticles (RNPs), and ribosomal subunits across the nuclear envelope. Due to its 8-fold rotational symmetry, all subunits are present with 8 copies or multiples thereof. ASM4 may form a subcomplex with NUP53, NDC1, and NUP170. Post-translationally, phosphorylated by CDC28.

It is found in the nucleus. Its subcellular location is the nuclear pore complex. It localises to the nucleus membrane. Its function is as follows. Functions as a component of the nuclear pore complex (NPC). NPC components, collectively referred to as nucleoporins (NUPs), can play the role of both NPC structural components and of docking or interaction partners for transiently associated nuclear transport factors. Active directional transport is assured by both, a Phe-Gly (FG) repeat affinity gradient for these transport factors across the NPC and a transport cofactor concentration gradient across the nuclear envelope (GSP1 and GSP2 GTPases associated predominantly with GTP in the nucleus, with GDP in the cytoplasm). May have a mitosis control function. This is Nucleoporin ASM4 (ASM4) from Saccharomyces cerevisiae (strain ATCC 204508 / S288c) (Baker's yeast).